The sequence spans 542 residues: Phosphoenolpyruvate carboxykinase (ATP) (542 aa).

Residues arginine 67, tyrosine 208, and lysine 214 each contribute to the substrate site. Residues lysine 214, histidine 233, and 249–257 (GLSGTGKTT) each bind ATP. Positions 214 and 233 each coordinate Mn(2+). Aspartate 270 provides a ligand contact to Mn(2+). ATP-binding positions include glutamate 298, arginine 334, 450-451 (RI), and threonine 456. Arginine 334 serves as a coordination point for substrate.

It belongs to the phosphoenolpyruvate carboxykinase (ATP) family. In terms of assembly, monomer. The cofactor is Mn(2+).

It is found in the cytoplasm. It catalyses the reaction oxaloacetate + ATP = phosphoenolpyruvate + ADP + CO2. It participates in carbohydrate biosynthesis; gluconeogenesis. Its function is as follows. Involved in the gluconeogenesis. Catalyzes the conversion of oxaloacetate (OAA) to phosphoenolpyruvate (PEP) through direct phosphoryl transfer between the nucleoside triphosphate and OAA. In Vibrio vulnificus (strain CMCP6), this protein is Phosphoenolpyruvate carboxykinase (ATP).